Reading from the N-terminus, the 865-residue chain is High affinity cAMP-specific and IBMX-insensitive 3',5'-cyclic phosphodiesterase 8B (865 aa).

Disordered stretches follow at residues 17 to 40 (CRDS…TAPL) and 52 to 92 (AMPP…TCRG). The segment covering 23–36 (SNSPRQTSSVSQGP) has biased composition (polar residues). Residues 75-90 (GSGSSTGSSGPATTTC) are compositionally biased toward low complexity. The PAS domain maps to 247-318 (ACNSVFTALD…DTINTCIKKG (72 aa)). The interval 373–415 (IHRDSGDNSQTEPHSFRHKSRRKESIDVKSISSRGSDAPSLQN) is disordered. Residues 402 to 415 (SISSRGSDAPSLQN) show a composition bias toward polar residues. A Phosphoserine modification is found at S497. The region spanning 519–855 (TINDVPPSIA…KHWKTLDDLK (337 aa)) is the PDEase domain. The active-site Proton donor is H595. 3 residues coordinate a divalent metal cation: H599, H635, and D636. Residues S731 and S734 each carry the phosphoserine modification. D761 serves as a coordination point for a divalent metal cation.

Belongs to the cyclic nucleotide phosphodiesterase family. PDE8 subfamily. The cofactor is a divalent metal cation. Widely expressed.

It carries out the reaction 3',5'-cyclic AMP + H2O = AMP + H(+). It functions in the pathway purine metabolism; 3',5'-cyclic AMP degradation; AMP from 3',5'-cyclic AMP: step 1/1. Its function is as follows. Hydrolyzes the second messenger cAMP, which is a key regulator of many important physiological processes. May be involved in specific signaling in the thyroid gland. In Mus musculus (Mouse), this protein is High affinity cAMP-specific and IBMX-insensitive 3',5'-cyclic phosphodiesterase 8B (Pde8b).